The chain runs to 551 residues: Frizzled-2 (551 aa).

The first 26 residues, 1 to 26 (MQGVTRASILLIIYHLFTLSLGQLHG), serve as a signal peptide directing secretion. The Extracellular segment spans residues 27 to 231 (EKGISVPEHG…FSQDEIRFAR (205 aa)). The FZ domain maps to 33-152 (PEHGFCQPIS…HGAEQICVGQ (120 aa)). 5 cysteine pairs are disulfide-bonded: Cys38–Cys99, Cys46–Cys92, Cys83–Cys120, Cys109–Cys149, and Cys113–Cys137. N-linked (GlcNAc...) asparagine glycosylation is present at Asn52. Asn153 carries an N-linked (GlcNAc...) asparagine glycan. Residues 232–252 (IWILIWSVLCCASTFITVTTY) traverse the membrane as a helical segment. Residues 253 to 265 (LVDMQRFRYPERP) lie on the Cytoplasmic side of the membrane. A helical transmembrane segment spans residues 266-286 (IIFLSGCYTMVSVAYIAGFVL). The Extracellular portion of the chain corresponds to 287–313 (GDKVVCNEGFSEDGYKTVVQGTKKEGC). The chain crosses the membrane as a helical span at residues 314–334 (TILFMMLYFFSMASSIWWVIL). The Cytoplasmic segment spans residues 335 to 356 (SLTWFLAAGMKWGHEAIEANSQ). A helical membrane pass occupies residues 357–377 (YFHLAAWAVPAVKTITILAMG). Topologically, residues 378–400 (QIDGDLLSGVCFVGLNNIDPLRG) are extracellular. Residues 401-421 (FVLAPLFVYLFIGTSFLLAGF) traverse the membrane as a helical segment. Residues 422–447 (VSLFRIRTIMKHDGTKTEKLERLMVR) are Cytoplasmic-facing. The chain crosses the membrane as a helical span at residues 448-468 (IGVFSVLYTVPATIVIACYFY). At 469 to 505 (EQAFREHWERSWVSQNCKSLAIPCPLQYTPRMTPDFT) the chain is on the extracellular side. A helical transmembrane segment spans residues 506 to 526 (VYMIKYLMTLIVGITSGFWIW). The Cytoplasmic portion of the chain corresponds to 527 to 534 (SGKTLHSW). The Lys-Thr-X-X-X-Trp motif, mediates interaction with the PDZ domain of Dvl family members motif lies at 529–534 (KTLHSW). Positions 549 to 551 (TTV) match the PDZ-binding motif.

The protein belongs to the G-protein coupled receptor Fz/Smo family. In terms of tissue distribution, widely expressed, especially in the eye anlage, otic vesicle and developing somites.

The protein localises to the membrane. Its subcellular location is the cell membrane. Functionally, receptor for Wnt proteins. Most of frizzled receptors are coupled to the beta-catenin canonical signaling pathway, which leads to the activation of disheveled proteins, inhibition of GSK-3 kinase, nuclear accumulation of beta-catenin and activation of Wnt target genes. A second signaling pathway involving PKC and calcium fluxes has been seen for some family members, but it is not yet clear if it represents a distinct pathway or if it can be integrated in the canonical pathway, as PKC seems to be required for Wnt-mediated inactivation of GSK-3 kinase. Both pathways seem to involve interactions with G-proteins. May be involved in transduction and intercellular transmission of polarity information during tissue morphogenesis and/or in differentiated tissues. This is Frizzled-2 (fzd2) from Xenopus laevis (African clawed frog).